The chain runs to 127 residues: Large ribosomal subunit protein bL20 (127 aa).

It belongs to the bacterial ribosomal protein bL20 family.

Functionally, binds directly to 23S ribosomal RNA and is necessary for the in vitro assembly process of the 50S ribosomal subunit. It is not involved in the protein synthesizing functions of that subunit. In Renibacterium salmoninarum (strain ATCC 33209 / DSM 20767 / JCM 11484 / NBRC 15589 / NCIMB 2235), this protein is Large ribosomal subunit protein bL20.